The following is a 249-amino-acid chain: MPRKFFVGGNFKMNGTAKSITHIITNLNSAKLDPSTEIVIAPPAIYLVLARQLANGQVAVSAQNVFDKPNGAFTGELSVEQLRDEKITWTLAGHSERRVLLREDDEFVARKTKAAINGGLNVILCIGESLEEREAGKTIDVVTRQLDAVAEEVSPAEWNKVVIAYEPIWAIGTGKVATTEQAQEVHASIRKWLNEKISPEAAENIRVIYGGSVTENNCRDLAAQPDVDGFLVGGASLKPAFVDIINARL.

Residues Asn10 and Lys12 each coordinate substrate. The Electrophile role is filled by His94. The Proton acceptor role is filled by Glu166.

This sequence belongs to the triosephosphate isomerase family. As to quaternary structure, homodimer. In terms of processing, the N-terminus is blocked.

It catalyses the reaction D-glyceraldehyde 3-phosphate = dihydroxyacetone phosphate. It participates in carbohydrate biosynthesis; gluconeogenesis. Its pathway is carbohydrate degradation; glycolysis; D-glyceraldehyde 3-phosphate from glycerone phosphate: step 1/1. In Paracoccidioides lutzii (strain ATCC MYA-826 / Pb01) (Paracoccidioides brasiliensis), this protein is Triosephosphate isomerase (TPI1).